The primary structure comprises 73 residues: Large ribosomal subunit protein bL31 (73 aa).

It belongs to the bacterial ribosomal protein bL31 family. Type A subfamily. Part of the 50S ribosomal subunit.

In terms of biological role, binds the 23S rRNA. The protein is Large ribosomal subunit protein bL31 of Allorhizobium ampelinum (strain ATCC BAA-846 / DSM 112012 / S4) (Agrobacterium vitis (strain S4)).